Here is a 156-residue protein sequence, read N- to C-terminus: MKIQLVAVGTRMPDWVTTGFKEYQRRFPRDMALELVEIPAGKRGKNADIARILHKEGEQMLAAIPKGNHIVSLDLPGKTWTTPQLATQLSRWQLDGRDVSLLIGGPEGLAPSCKQAASQSWCLSALTLPHPLVRVVVAESLYRAWSVNTNHPYHRE.

S-adenosyl-L-methionine contacts are provided by residues L73, G104, and L123–L128.

It belongs to the RNA methyltransferase RlmH family. In terms of assembly, homodimer.

Its subcellular location is the cytoplasm. The enzyme catalyses pseudouridine(1915) in 23S rRNA + S-adenosyl-L-methionine = N(3)-methylpseudouridine(1915) in 23S rRNA + S-adenosyl-L-homocysteine + H(+). Specifically methylates the pseudouridine at position 1915 (m3Psi1915) in 23S rRNA. The sequence is that of Ribosomal RNA large subunit methyltransferase H from Shewanella woodyi (strain ATCC 51908 / MS32).